A 326-amino-acid chain; its full sequence is Immune-associated nucleotide-binding protein 4 (326 aa).

The AIG1-type G domain maps to 17 to 225 (EPIKNIVLVG…FTDEMHRKIQ (209 aa)). Positions 26–33 (GRTGNGKS) are G1. GTP contacts are provided by residues 26–34 (GRTGNGKSA) and S47. Residues 53–57 (GVTMK) form a G2 region. A G3 region spans residues 75 to 78 (DTPG). The tract at residues 145–148 (TGGD) is G4. Positions 184 to 186 (DNR) are G5. N185 contributes to the GTP binding site. Positions 217-241 (TDEMHRKIQKEAETLREQQKEVESK) form a coiled coil.

Belongs to the TRAFAC class TrmE-Era-EngA-EngB-Septin-like GTPase superfamily. AIG1/Toc34/Toc159-like paraseptin GTPase family. IAN subfamily. In terms of tissue distribution, expressed in radicles of the germinating seeds.

This Arabidopsis thaliana (Mouse-ear cress) protein is Immune-associated nucleotide-binding protein 4.